A 595-amino-acid chain; its full sequence is P2X purinoceptor 7 (595 aa).

At 1–22 the chain is on the cytoplasmic side; the sequence is MPACCSWNDVFQYETNKVTRIQ. A lipid anchor (S-palmitoyl cysteine) is attached at cysteine 4. Residues 23–46 form a helical membrane-spanning segment; that stretch reads SVNYGTIKWILHMTVFSYVSFALM. Topologically, residues 47 to 328 are extracellular; it reads SDKLYQRKEP…ILVFGTGGKF (282 aa). The N-linked (GlcNAc...) asparagine glycan is linked to asparagine 74. Disulfide bonds link cysteine 119–cysteine 168, cysteine 129–cysteine 152, and cysteine 135–cysteine 162. The residue at position 125 (arginine 125) is an ADP-ribosylarginine. A glycan (N-linked (GlcNAc...) asparagine) is linked at asparagine 187. Threonine 189 contacts ATP. Asparagine 202 and asparagine 213 each carry an N-linked (GlcNAc...) asparagine glycan. Cysteine 216 and cysteine 226 are disulfide-bonded. Asparagine 241 carries an N-linked (GlcNAc...) asparagine glycan. A disulfide bond links cysteine 260 and cysteine 269. N-linked (GlcNAc...) asparagine glycosylation occurs at asparagine 284. Residues arginine 294 and lysine 311 each contribute to the ATP site. Residues 329-353 traverse the membrane as a helical segment; it reads DIIQLVVYIGSTLSYFGLATVCIDL. Serine 342 provides a ligand contact to Na(+). At 354–595 the chain is on the cytoplasmic side; sequence IINTYASTCC…GQYSGFKYPY (242 aa). The interval 360 to 377 is C-cys anchor; that stretch reads STCCRSRVYPSCKCCEPC. 4 S-palmitoyl cysteine lipidation sites follow: cysteine 362, cysteine 363, cysteine 374, and cysteine 377. The interval 395–595 is cytoplasmic ballast; that stretch reads KPTLKYVSFV…GQYSGFKYPY (201 aa). Zn(2+) contacts are provided by cysteine 479, cysteine 499, and cysteine 506. Arginine 546, histidine 547, tyrosine 550, and alanine 567 together coordinate GTP. Cysteine 572 is a Zn(2+) binding site. The GTP site is built by lysine 583, serine 589, and glycine 590.

This sequence belongs to the P2X receptor family. In terms of assembly, homotrimer. Interacts with LAMA3, ITGB2, ACTB, ACTN4, SVIL, MPP3, HSPA1, HSPCB, HSPA8, PIK230 and PTPRB. Interacts (via C-terminus) with EMP2. Post-translationally, phosphorylation results in its inactivation. In terms of processing, ADP-ribosylation at Arg-125 is necessary and sufficient to activate P2RX7 and gate the channel. Palmitoylation of several cysteines in the C-terminal cytoplasmic tail is required for efficient localization to cell surface. Palmitoylation prevents channel desensitization by physically anchoring the palmitoylated groups to the membrane.

The protein resides in the cell membrane. It carries out the reaction Ca(2+)(in) = Ca(2+)(out). The catalysed reaction is K(+)(in) = K(+)(out). The enzyme catalyses Na(+)(in) = Na(+)(out). Its activity is regulated as follows. Activated by high extracellular ATP levels (0.1-2.5 mM). The synthetic analog 2'(3')-O-(4-benzoylbenzoyl)ATP (BzATP) acts as a potent agonist. Does not undergo desensitization, instead, undergoes a facilitation process where currents progressively increase with repetitive or prolonged agonist application. Palmitoylation prevents channel desensitization. The permeability of the P2RX7 channel is modulated by the amount of cholesterol in the plasma membrane. Functionally, ATP-gated nonselective transmembrane cation channel that requires high millimolar concentrations of ATP for activation. Upon ATP binding, it rapidly opens to allow the influx of small cations Na(+) and Ca(2+), and the K(+) efflux. Also has the ability to form a large pore in the cell membrane, allowing the passage of large cationic molecules. In microglia, may mediate the transmembrane transport of exogenous NADPH. In immune cells, P2RX7 acts as a molecular sensor in pathological inflammatory states by detecting and responding to high local concentrations of extracellar ATP. In microglial cells, P2RX7 activation leads to the release of pro-inflammatory cytokines, such as IL-1beta and IL-18, through the activation of the NLRP3 inflammasome and caspase-1. Cooperates with KCNK6 to activate NLRP3 inflammasome. Activates death pathways leading to apoptosis and autophagy. Activates death pathways leading to pyroptosis. Has a higher affinity for ATP, slower deactivation and an increased propensity to form large cation-permeable pores. The polypeptide is P2X purinoceptor 7 (P2rx7) (Rattus norvegicus (Rat)).